The chain runs to 345 residues: Pectin lyase (345 aa).

Positions 1-24 are cleaved as a signal peptide; that stretch reads MKRFCLWFAVFSLLLVLLPGKAFG. Arg-234 is an active-site residue.

Belongs to the polysaccharide lyase 1 family.

It localises to the secreted. It carries out the reaction Eliminative cleavage of (1-&gt;4)-alpha-D-galacturonan methyl ester to give oligosaccharides with 4-deoxy-6-O-methyl-alpha-D-galact-4-enuronosyl groups at their non-reducing ends.. Its activity is regulated as follows. Inhibited by Hg(2+) and Mn(2+). Not affected by EDTA in vitro. Catalyzes the depolymerization of pectins of methyl esterification degree from 13 to 75%, with an endo mode of action. Cannot degrade polygalacturonate. Also displays protopectinase activity, i.e. releases pectin from protopectin. This is Pectin lyase (pelB) from Bacillus subtilis.